Here is a 726-residue protein sequence, read N- to C-terminus: Sensory/regulatory protein RpfC (726 aa).

Helical transmembrane passes span 23 to 40 (NLIR…LGWR), 52 to 72 (TWLI…AILL), 95 to 115 (IMAI…WVTI), 128 to 148 (AATA…PYWK), and 152 to 172 (YLSW…DSLL). A Histidine kinase domain is found at 195 to 417 (NMSHEFRTPL…VFWFELPMAI (223 aa)). Residue His-198 is modified to Phosphohistidine; by autocatalysis. One can recognise a Response regulatory domain in the interval 463-581 (RMLVADDHEA…KLLDTLADLA (119 aa)). Asp-512 bears the 4-aspartylphosphate mark. The HPt domain occupies 618 to 711 (GEEFERQFVR…KAGKDALDAR (94 aa)). Phosphohistidine is present on His-657.

As to quaternary structure, at low DSF concentrations, interacts with RpfF. Autophosphorylated. Activation may require a sequential transfer of a phosphate group from a His in the primary transmitter domain, to an Asp in the receiver domain and to a His in the secondary transmitter domain.

It is found in the cell inner membrane. The enzyme catalyses ATP + protein L-histidine = ADP + protein N-phospho-L-histidine.. Its activity is regulated as follows. Binding of DSF to the sensor region causes allosteric change, which facilitates RpfC autophosphorylation. Its function is as follows. Hybrid sensor kinase that regulates diverse biological functions through two distinct molecular mechanisms. At low cell density, the extracellular concentration of the diffusible signaling factor (DSF) is below a threshold, and unphosphorylated RpfC is involved in the negative regulation of DSF synthesis, via direct interaction with the DSF synthase RpfF. Interaction prevents synthesis of DSF, which remains at a basal level. This activity does not involve the phosphorelay mechanism and is not dependent on RpfG. Is also member of the two-component regulatory system RpfG/RpfC, which is involved in the perception and response to DSF, which is essential for cell-cell signaling. At high cell density, the level of extracellular DSF increases and binding of DSF to the sensor region of RpfC causes autophosphorylation of RpfC, which results in the release of RpfF and the activation of RpfG via a four-step phosphorelay. Activation of RpfG leads to the positive regulation of biofilm dispersal and the production of virulence factors. The polypeptide is Sensory/regulatory protein RpfC (rpfC) (Xanthomonas campestris pv. campestris (strain ATCC 33913 / DSM 3586 / NCPPB 528 / LMG 568 / P 25)).